The chain runs to 313 residues: Porphobilinogen deaminase (313 aa).

An S-(dipyrrolylmethanemethyl)cysteine modification is found at Cys-242.

This sequence belongs to the HMBS family. As to quaternary structure, monomer. It depends on dipyrromethane as a cofactor.

The enzyme catalyses 4 porphobilinogen + H2O = hydroxymethylbilane + 4 NH4(+). The protein operates within porphyrin-containing compound metabolism; protoporphyrin-IX biosynthesis; coproporphyrinogen-III from 5-aminolevulinate: step 2/4. In terms of biological role, tetrapolymerization of the monopyrrole PBG into the hydroxymethylbilane pre-uroporphyrinogen in several discrete steps. This chain is Porphobilinogen deaminase, found in Pseudomonas putida (strain ATCC 47054 / DSM 6125 / CFBP 8728 / NCIMB 11950 / KT2440).